The sequence spans 106 residues: Thioredoxin-2 (106 aa).

The region spanning 1 to 106 (MVYQVKDKAD…RLEDVIKANI (106 aa)) is the Thioredoxin domain. Catalysis depends on nucleophile residues cysteine 32 and cysteine 35. A disulfide bond links cysteine 32 and cysteine 35.

Belongs to the thioredoxin family. In terms of assembly, monomer.

Functionally, participates in various redox reactions through the reversible oxidation of its active center dithiol to a disulfide and catalyzes dithiol-disulfide exchange reactions. As a reducing substrate of peroxiredoxin 1, thioredoxin 2 is preferred over thioredoxin 1. The polypeptide is Thioredoxin-2 (Drosophila melanogaster (Fruit fly)).